A 528-amino-acid polypeptide reads, in one-letter code: Dihydromonacolin L monooxygenase LovA (528 aa).

At 1-23 (MTVDALTQPHHLLSLAWNDTQQH) the chain is on the cytoplasmic side. Residues 24–44 (GSWFAPLVTTSAGLLCLLLYL) form a helical; Signal-anchor for type II membrane protein membrane-spanning segment. Residues 45-528 (CSSGRRSDLP…DEDIRLPGSL (484 aa)) lie on the Lumenal side of the membrane. A heme-binding site is contributed by Cys-465.

Belongs to the cytochrome P450 family. Requires heme as cofactor.

The protein resides in the membrane. It localises to the endoplasmic reticulum membrane. The catalysed reaction is dihydromonacolin L carboxylate + reduced [NADPH--hemoprotein reductase] + O2 = monacolin L carboxylate + oxidized [NADPH--hemoprotein reductase] + 2 H2O + H(+). It carries out the reaction monacolin L carboxylate + reduced [NADPH--hemoprotein reductase] + O2 = monacolin J carboxylate + oxidized [NADPH--hemoprotein reductase] + H2O + H(+). Its pathway is polyketide biosynthesis; lovastatin biosynthesis. Dihydromonacolin L monooxygenase; part of the gene cluster that mediates the biosynthesis of lovastatin (also known as mevinolin, mevacor or monacolin K), a hypolipidemic inhibitor of (3S)-hydroxymethylglutaryl-coenzyme A (HMG-CoA) reductase (HMGR). The first step in the biosynthesis of lovastatin is the production of dihydromonacolin L acid by the lovastatin nonaketide synthase lovB and the trans-acting enoyl reductase lovC via condensation of one acetyl-CoA unit and 8 malonyl-CoA units. Dihydromonacolin L acid is released from lovB by the thioesterase lovG. Next, dihydromonacolin L acid is oxidized by the dihydromonacolin L monooxygenase lovA twice to form monacolin J acid. The 2-methylbutyrate moiety of lovastatin is synthesized by the lovastatin diketide synthase lovF via condensation of one acetyl-CoA unit and one malonyl-CoA unit. Finally, the covalent attachment of this moiety to monacolin J acid is catalyzed by the transesterase lovD to yield lovastatin. LovD has broad substrate specificity and can also convert monacolin J to simvastatin using alpha-dimethylbutanoyl-S-methyl-3-mercaptopropionate (DMB-S-MMP) as the thioester acyl donor, and can also catalyze the reverse reaction and function as hydrolase in vitro. LovD has much higher activity with LovF-bound 2-methylbutanoate than with free diketide substrates. In Aspergillus terreus, this protein is Dihydromonacolin L monooxygenase LovA.